Reading from the N-terminus, the 1126-residue chain is NUT family member 1 (1126 aa).

Disordered stretches follow at residues 1 to 56, 334 to 367, 475 to 515, 537 to 559, 664 to 692, 755 to 810, and 932 to 1014; these read MASD…PVFS, IPKKAASKTRAPRRRQRKPQRPPVPEAPKEIPPE, EDAQ…QGAA, QEQTLGGPAGIHKDGNNLPSPSS, AGMLTRGREPPSVVSQKGSSRAVRGDDRG, ALNS…GPGL, and GEGR…EELS. Residues 30–55 are compositionally biased toward pro residues; that stretch reads FAPPPPVPPDQPLWEPSPQPPIPPVF. Residues 338-353 show a composition bias toward basic residues; sequence AASKTRAPRRRQRKPQ. Over residues 962–975 the composition is skewed to polar residues; sequence KLTNGQGQGSTSPR. Phosphoserine is present on Ser-973. A compositionally biased stretch (basic and acidic residues) spans 987–1005; that stretch reads TPIKEKCTSADRAKRRETE. Residues Ser-1022, Ser-1025, and Ser-1027 each carry the phosphoserine modification. A disordered region spans residues 1032 to 1126; that stretch reads PLSTRQASGG…SKRKKRRRSQ (95 aa). Residue Gln-1042 is modified to N5-methylglutamine. The segment covering 1106–1126 has biased composition (basic residues); it reads PRKRRRDGFVTSKRKKRRRSQ.

Belongs to the NUT family. Post-translationally, methylated at Gln-1042 by N6AMT1. Phosphorylation on Ser-1022, Ser-1025 or Ser-1027 is important for cytoplasmic export.

It is found in the cytoplasm. Its subcellular location is the nucleus. In terms of biological role, plays a role in the regulation of proliferation. Regulates TERT expression by modulating SP1 binding to TERT promoter binding sites. The protein is NUT family member 1 of Mus musculus (Mouse).